Here is an 833-residue protein sequence, read N- to C-terminus: cGMP-specific 3',5'-cyclic phosphodiesterase (833 aa).

A Phosphoserine modification is found at Ser-60. Residues 82 to 101 (FLSDSGKKEQMPLTSPRFDS) are disordered. GAF domains lie at 122-272 (DVTA…GIVL) and 304-461 (SLEV…GLGI). Residues 494–818 (ETRELQALAA…QKWQALADQQ (325 aa)) form the PDEase domain. Catalysis depends on His-571, which acts as the Proton donor. Zn(2+) is bound by residues His-575, His-611, Asp-612, and Asp-722. Asp-612 is a Mg(2+) binding site. Gln-775 contributes to the 3',5'-cyclic GMP binding site.

This sequence belongs to the cyclic nucleotide phosphodiesterase family. Requires Zn(2+) as cofactor. The cofactor is Mg(2+). Post-translationally, phosphorylation is regulated by binding of cGMP to the two allosteric sites. Phosphorylation by PRKG1 leads to its activation.

It catalyses the reaction 3',5'-cyclic GMP + H2O = GMP + H(+). It functions in the pathway purine metabolism; 3',5'-cyclic GMP degradation; GMP from 3',5'-cyclic GMP: step 1/1. Its function is as follows. Plays a role in signal transduction by regulating the intracellular concentration of cyclic nucleotides. This phosphodiesterase catalyzes the specific hydrolysis of cGMP to 5'-GMP. Specifically regulates nitric-oxide-generated cGMP. The polypeptide is cGMP-specific 3',5'-cyclic phosphodiesterase (Pde5a) (Rattus norvegicus (Rat)).